A 1106-amino-acid chain; its full sequence is Protein kinase C (1106 aa).

An REM-1 1 domain is found at 1 to 67 (MDGDDLIASV…MRELQLRQMK (67 aa)). Positions 65–138 (QMKQEGASPT…PRPFAPVPKA (74 aa)) are disordered. Positions 79–93 (PPNPDGSAPVPPPKD) are enriched in pro residues. The REM-1 2 domain occupies 149-226 (KYDTPYLGPK…LKRYEDLHVD (78 aa)). Residues 232 to 350 (APDDESLSTP…MRRKKIESEF (119 aa)) form the C2 domain. The span at 361–370 (MEHGAAHGRQ) shows a compositional bias: basic and acidic residues. The disordered stretch occupies residues 361-400 (MEHGAAHGRQDAGGAPGSSNRPPSGGHSGGPGQGYAGGAP). The span at 386-400 (GHSGGPGQGYAGGAP) shows a compositional bias: gly residues. 2 Phorbol-ester/DAG-type zinc fingers span residues 460-508 (GHKF…VTKC) and 528-578 (PHRF…PDFC). Polar residues-rich tracts occupy residues 600-609 (KSASVSSGLS) and 658-668 (YIPPQSPTAAQ). 2 disordered regions span residues 600 to 625 (KSASVSSGLSGRTLRPGGPPQAPQDN) and 658 to 719 (YIPP…HAHY). Positions 683 to 693 (AAAAAAAAAAA) are enriched in low complexity. A Protein kinase domain is found at 781–1040 (FNFLAVLGKG…AQEVMSHAFF (260 aa)). ATP is bound by residues 787 to 795 (LGKGNFGKV) and Lys-810. Asp-906 acts as the Proton acceptor in catalysis. Residues 1041–1106 (RNINWDDIYH…RGFSYTADFA (66 aa)) enclose the AGC-kinase C-terminal domain. Thr-1082 bears the Phosphothreonine mark. Residue Ser-1100 is modified to Phosphoserine. Tyr-1101 carries the phosphotyrosine modification.

The protein belongs to the protein kinase superfamily. AGC Ser/Thr protein kinase family. PKC subfamily. As to quaternary structure, interacts with hsp90.

The catalysed reaction is L-seryl-[protein] + ATP = O-phospho-L-seryl-[protein] + ADP + H(+). It carries out the reaction L-threonyl-[protein] + ATP = O-phospho-L-threonyl-[protein] + ADP + H(+). Protein kinase C; part of cell wall integrity (CWI) signaling pathway composed of pkcA, the bck1-mkk2-mpka MAPK cascade and the downstream rlmA transcription regulator. The CWI signaling pathway regulates cell wall integrity and pyomelanin formation. CWI also controls oxidative stress response, gliotoxin production, iron adaptation and asexual development. Finally, CWI is constitutively required for A.fumigatus to cope with the temperature increase found in the mammalian lung environment, during infection. Modulates the expression of fumiquinazoline cluster during conidiogenesis. The polypeptide is Protein kinase C (Aspergillus fumigatus (strain ATCC MYA-4609 / CBS 101355 / FGSC A1100 / Af293) (Neosartorya fumigata)).